The primary structure comprises 433 residues: Tol-Pal system protein TolB (433 aa).

The first 26 residues, 1-26 (MSLMTKLGFRALVASCLIAAGGAAHA), serve as a signal peptide directing secretion.

It belongs to the TolB family. In terms of assembly, the Tol-Pal system is composed of five core proteins: the inner membrane proteins TolA, TolQ and TolR, the periplasmic protein TolB and the outer membrane protein Pal. They form a network linking the inner and outer membranes and the peptidoglycan layer.

The protein localises to the periplasm. Functionally, part of the Tol-Pal system, which plays a role in outer membrane invagination during cell division and is important for maintaining outer membrane integrity. In Burkholderia thailandensis (strain ATCC 700388 / DSM 13276 / CCUG 48851 / CIP 106301 / E264), this protein is Tol-Pal system protein TolB.